Here is a 146-residue protein sequence, read N- to C-terminus: Prefoldin subunit alpha (146 aa).

This sequence belongs to the prefoldin alpha subunit family. As to quaternary structure, heterohexamer of two alpha and four beta subunits.

It localises to the cytoplasm. Its function is as follows. Molecular chaperone capable of stabilizing a range of proteins. Seems to fulfill an ATP-independent, HSP70-like function in archaeal de novo protein folding. The polypeptide is Prefoldin subunit alpha (Methanobrevibacter smithii (strain ATCC 35061 / DSM 861 / OCM 144 / PS)).